Consider the following 707-residue polypeptide: Acetyl-coenzyme A synthetase 1 (707 aa).

Residues 242–245 (RGGK) and Thr361 each bind CoA. ATP is bound by residues 437–439 (GEP), 461–466 (DTYWQT), Asp553, and Arg568. Ser576 provides a ligand contact to CoA. Arg579 lines the ATP pocket. Residue Arg644 coordinates CoA. The Microbody targeting signal motif lies at 705–707 (VKL).

The protein belongs to the ATP-dependent AMP-binding enzyme family.

The protein localises to the microsome. Its subcellular location is the endoplasmic reticulum. The enzyme catalyses acetate + ATP + CoA = acetyl-CoA + AMP + diphosphate. In terms of biological role, may be required for assimilation of ethanol and acetate. The sequence is that of Acetyl-coenzyme A synthetase 1 (ACS1) from Kluyveromyces lactis (strain ATCC 8585 / CBS 2359 / DSM 70799 / NBRC 1267 / NRRL Y-1140 / WM37) (Yeast).